We begin with the raw amino-acid sequence, 103 residues long: Large ribosomal subunit protein bL21 (103 aa).

Belongs to the bacterial ribosomal protein bL21 family. In terms of assembly, part of the 50S ribosomal subunit. Contacts protein L20.

Its function is as follows. This protein binds to 23S rRNA in the presence of protein L20. This is Large ribosomal subunit protein bL21 from Shewanella piezotolerans (strain WP3 / JCM 13877).